The primary structure comprises 283 residues: Bifunctional protein FolD (283 aa).

Residues 159–161, Ser184, and Ile225 contribute to the NADP(+) site; that span reads GRS.

Belongs to the tetrahydrofolate dehydrogenase/cyclohydrolase family. In terms of assembly, homodimer.

The enzyme catalyses (6R)-5,10-methylene-5,6,7,8-tetrahydrofolate + NADP(+) = (6R)-5,10-methenyltetrahydrofolate + NADPH. It catalyses the reaction (6R)-5,10-methenyltetrahydrofolate + H2O = (6R)-10-formyltetrahydrofolate + H(+). Its pathway is one-carbon metabolism; tetrahydrofolate interconversion. In terms of biological role, catalyzes the oxidation of 5,10-methylenetetrahydrofolate to 5,10-methenyltetrahydrofolate and then the hydrolysis of 5,10-methenyltetrahydrofolate to 10-formyltetrahydrofolate. The chain is Bifunctional protein FolD from Methanoculleus marisnigri (strain ATCC 35101 / DSM 1498 / JR1).